Consider the following 278-residue polypeptide: Ankyrin repeat and SOCS box protein 13 (278 aa).

ANK repeat units follow at residues 18-47 (VERTPVHEAAQRGESLQLQQLIDSGACVNQ), 51-80 (DSITPLHAASLQGQAQCVQLLLAAGAQVDA), 84-113 (DGSTPLCDACASGSIECVKLLLSYGAKVNP), 116-145 (YTASPLHEACMSGSSECVRLLIDVGANLEA), 149-178 (HFGTPLHVACAREHLDCVKVLLNAGANVNA), and 181-210 (LHETALHHAAKVKNVDLIEMLIEFGGNIYA). Residues 229 to 278 (AKCFEYYEKTPLSLSQLCRVSLRKATGVRGLEKVAKLNIPPRLIDYLSYN) form the SOCS box domain.

It belongs to the ankyrin SOCS box (ASB) family.

The protein operates within protein modification; protein ubiquitination. Its function is as follows. May be a substrate-recognition component of a SCF-like ECS (Elongin-Cullin-SOCS-box protein) E3 ubiquitin-protein ligase complex which mediates the ubiquitination and subsequent proteasomal degradation of target proteins. This chain is Ankyrin repeat and SOCS box protein 13 (Asb13), found in Mus musculus (Mouse).